The primary structure comprises 860 residues: DNA mismatch repair protein MutS (860 aa).

606-613 serves as a coordination point for ATP; that stretch reads GPNMSGKS.

It belongs to the DNA mismatch repair MutS family.

Its function is as follows. This protein is involved in the repair of mismatches in DNA. It is possible that it carries out the mismatch recognition step. This protein has a weak ATPase activity. This is DNA mismatch repair protein MutS from Geobacillus sp. (strain WCH70).